The following is a 39-amino-acid chain: Photosystem II reaction center protein J (39 aa).

A helical transmembrane segment spans residues I7–F27.

The protein belongs to the PsbJ family. In terms of assembly, PSII is composed of 1 copy each of membrane proteins PsbA, PsbB, PsbC, PsbD, PsbE, PsbF, PsbH, PsbI, PsbJ, PsbK, PsbL, PsbM, PsbT, PsbX, PsbY, PsbZ, Psb30/Ycf12, peripheral proteins PsbO, CyanoQ (PsbQ), PsbU, PsbV and a large number of cofactors. It forms dimeric complexes.

It is found in the cellular thylakoid membrane. Functionally, one of the components of the core complex of photosystem II (PSII). PSII is a light-driven water:plastoquinone oxidoreductase that uses light energy to abstract electrons from H(2)O, generating O(2) and a proton gradient subsequently used for ATP formation. It consists of a core antenna complex that captures photons, and an electron transfer chain that converts photonic excitation into a charge separation. The sequence is that of Photosystem II reaction center protein J from Gloeothece citriformis (strain PCC 7424) (Cyanothece sp. (strain PCC 7424)).